We begin with the raw amino-acid sequence, 834 residues long: Sodium/hydrogen exchanger 3 (834 aa).

Residues 1-25 (MWGLGARGPDRGLLLALALGGLARA) form the signal peptide. Residues 26-51 (GGVEVEPGGAHGESGGFQVVTFEWAH) lie on the Extracellular side of the membrane. Residues 52-74 (VQDPYVIALWILVASLAKIGFHL) form a helical membrane-spanning segment. The Cytoplasmic segment spans residues 75–82 (SHKVTSVV). The chain crosses the membrane as a helical span at residues 83–102 (PESALLIVLGLVLGGIVWAA). The Extracellular portion of the chain corresponds to 103–111 (DHIASFTLT). A helical transmembrane segment spans residues 112–129 (PTVFFFYLLPPIVLDAGY). The Cytoplasmic portion of the chain corresponds to 130–132 (FMP). A helical membrane pass occupies residues 133 to 168 (NRLFFGNLGTILLYAVVGTVWNAATTGLSLYGVFLS). A 1,2-diacyl-sn-glycero-3-phospho-(1D-myo-inositol) is bound by residues G138, G141, and T142. The Extracellular segment spans residues 169–181 (GLMGDLQIGLLDF). A helical membrane pass occupies residues 182–203 (LLFGSLMAAVDPVAVLAVFEEV). Topologically, residues 204–205 (HV) are cytoplasmic. A helical membrane pass occupies residues 206-237 (NEVLFIIVFGESLLNDAVTVVLYNVFESFVAL). The Extracellular segment spans residues 238–244 (GGDNVTG). N241 carries an N-linked (GlcNAc...) asparagine glycan. The chain crosses the membrane as a helical span at residues 245–279 (VDCVKGIVSFFVVSLGGTLVGVVFAFLLSLVTRFT). Residues 280-281 (KH) lie on the Cytoplasmic side of the membrane. A helical transmembrane segment spans residues 282-304 (VRIIEPGFVFIISYLSYLTSEML). The Extracellular segment spans residues 305-306 (SL). The helical transmembrane segment at 307–323 (SAILAITFCGICCQKYV) threads the bilayer. The Cytoplasmic segment spans residues 324 to 330 (KANISEQ). A helical transmembrane segment spans residues 331–359 (SATTVRYTMKMLASSAETIIFMFLGISAV). Residues 360–367 (NPFIWTWN) are Extracellular-facing. Residues 368-389 (TAFVLLTLVFISVYRAIGVVLQ) form a helical membrane-spanning segment. The Cytoplasmic portion of the chain corresponds to 390 to 402 (TWLLNRYRMVQLE). M398 provides a ligand contact to a 1,2-diacyl-sn-glycero-3-phospho-(1D-myo-inositol). Residues 403-426 (PIDQVVLSYGGLRGAVAFALVVLL) form a helical membrane-spanning segment. Residues 427-433 (DGDKVKE) are Extracellular-facing. A helical transmembrane segment spans residues 434–467 (KNLFVSTTIIVVFFTVIFQGLTIKPLVQWLKVKR). Residues 468-834 (SEHREPRLNE…PAALPESTHM (367 aa)) lie on the Cytoplasmic side of the membrane. A 1,2-diacyl-sn-glycero-3-phospho-(1D-myo-inositol)-binding residues include Q497, I498, and H500. Phosphoserine occurs at positions 555 and 563. The tract at residues 575–589 (RSSTVEASVSYLLRE) is interaction with EZR. The interval 590-667 (NVSAVCLDMQ…RKRLESFKST (78 aa)) is interaction with NHERF4. An interaction with AHCYL1 region spans residues 591 to 695 (VSAVCLDMQS…AQKRRNSSIP (105 aa)). Phosphoserine occurs at positions 592 and 607. A Phosphoserine; by SGK1 modification is found at S663. The span at 679 to 691 (KLYKRERAQKRRN) shows a compositional bias: basic residues. The disordered stretch occupies residues 679–728 (KLYKRERAQKRRNSSIPNGKLPMESPAQNFTIKEKDLELSDTEEPPNYDE). Positions 717 to 728 (LSDTEEPPNYDE) are enriched in acidic residues. Residues S718, S810, and S813 each carry the phosphoserine modification. The tract at residues 814 to 834 (FLQADGPEERPPAALPESTHM) is disordered.

The protein belongs to the monovalent cation:proton antiporter 1 (CPA1) transporter (TC 2.A.36) family. As to quaternary structure, homodimer. Found in the forms of complex and dynamic macromolecular complexes. Binds NHERF1 and NHERF2. Interacts with CHP1; increases SLC9A3 trafficking and activity at the plasma membrane. Interacts with CHP2 and SHANK2. Interacts with PDZK1 (via C-terminal PDZ domain). Interacts with NHERF4 and interaction decrease in response to elevated calcium ion levels. Interacts with AHCYL1; the interaction is required for SLC9A3 activity. Interacts with SNX27 (via PDZ domains); directs SLC9A3 membrane insertion from early endosomes to the plasma membrane. Interacts with EZR; interaction targets SLC9A3 to the apical membrane. Phosphorylated by PKA, which inhibits activity. Phosphorylation at Ser-663 by SGK1 is associated with increased abundance at the cell membrane. Phosphorylation at Ser-718 by CSNK2A1 regulates SLC9A3 activity through the formation of multiple signaling complexes.

The protein localises to the apical cell membrane. It is found in the cell membrane. It localises to the recycling endosome membrane. Its subcellular location is the early endosome membrane. It carries out the reaction Na(+)(in) + H(+)(out) = Na(+)(out) + H(+)(in). With respect to regulation, seems to switch between active and inactive modes in response to various stimuli. Activated directly or indirectly by membrane phosphatidylinositol (PIs). Regulated by a variety of auxiliary proteins, which facilitate the maturation, cell surface expression and function of the transporter. Inhibited specifically by the drug tenapanor. Its function is as follows. Plasma membrane Na(+)/H(+) antiporter. Exchanges intracellular H(+) ions for extracellular Na(+) in 1:1 stoichiometry, playing a key role in salt and fluid absorption and pH homeostasis. Major apical Na(+)/H(+) exchanger in kidney and intestine playing an important role in renal and intestine Na(+) absorption and blood pressure regulation. This chain is Sodium/hydrogen exchanger 3, found in Homo sapiens (Human).